Here is a 782-residue protein sequence, read N- to C-terminus: MLSLRVACLILSLASTVWTADTGTTSEFIEAGGDIRGPRIVERQPSQCKETDWPFCSDEDWNHKCPSGCRMKGLIDEANQDFTNRINKLKNSLFDFQKNNKDSNSLTRNIMEYLRGDFANANNFDNTFGQVSEDLRRRIQILKRKVIEKAQQIQVLQKDVRDQLIDMKRLEVDIDIKIRSCKGSCSRSVSREINLKDYEGQQKQLEQVIAKDLLPAKDRQYLPAIKMSPVPDLVPGSFKSQLQEGPPEWKALTEMRQMRMELERPGKDGASRGDLPGDSRGDSATRGPGSKIENPMTPGHGGSGYWRPGSSGSGSDGNWGSGTTGSDDTGTWGAGSSRPSSGSGNLKPSNPDWGEFSEFGGSSSPATRKEYHTGKLVTSKGDKELLIGNEKVTSTGTSTTRRSCSKTITKTVLGNDGHREVVKEVVTSDDGSDCGDGMDLGLTHSFSGRLDELSRMHPELGSFYDSRFGSLTSNFKEFGSKTSDSDIFTDIENPSSHVPEFSSSSKTSTVRKQVTKSYKMADEAASEAHQEGDTRTTKRGRARTMRDCDDVLQTHPSGAQNGIFSIKLPGSSKIFSVYCDQETSLGGWLLIQQRMDGSLNFNRTWQDYKRGFGSLNDKGEGEFWLGNDYLHLLTLRGSVLRVELEDWAGKEAYAEYHFRVGSEAEGYALQVSSYQGTAGDALMEGSVEEGTEYTSHSNMQFSTFDRDADQWEENCAEVYGGGWWYNSCQAANLNGIYYPGGTYDPRNNSPYEIENGVLWVPFRGADYSLWAVRMKIRPLVGQ.

Positions 1-19 (MLSLRVACLILSLASTVWT) are cleaved as a signal peptide. The stretch at 68–547 (GCRMKGLIDE…KRGRARTMRD (480 aa)) forms a coiled coil. Positions 264-283 (RPGKDGASRGDLPGDSRGDS) are enriched in basic and acidic residues. A disordered region spans residues 264–374 (RPGKDGASRG…PATRKEYHTG (111 aa)). S279 is modified (phosphoserine). Gly residues predominate over residues 311-323 (SGSGSDGNWGSGT). 2 stretches are compositionally biased toward low complexity: residues 324 to 344 (TGSDDTGTWGAGSSRPSSGSG) and 354 to 364 (GEFSEFGGSSS). S326 bears the Phosphoserine mark. Cysteines 404 and 434 form a disulfide. Phosphoserine is present on S470. The residue at position 499 (P499) is a 4-hydroxyproline; by P4HA1. The span at 522–536 (DEAASEAHQEGDTRT) shows a compositional bias: basic and acidic residues. Residues 522–542 (DEAASEAHQEGDTRTTKRGRA) form a disordered region. At S526 the chain carries Phosphoserine. A Fibrinogen C-terminal domain is found at 539–780 (RGRARTMRDC…AVRMKIRPLV (242 aa)). N602 carries N-linked (GlcNAc...) asparagine glycosylation. Ca(2+) contacts are provided by D707, D709, W711, and E713. An intrachain disulfide couples C715 to C728.

In terms of assembly, heterohexamer; disulfide linked. Contains 2 sets of 3 non-identical chains (alpha, beta and gamma). The 2 heterotrimers are in head to head conformation with the N-termini in a small central domain. Conversion of fibrinogen to fibrin is triggered by thrombin, which cleaves fibrinopeptides A and B from alpha and beta chains, and thus exposes the N-terminal polymerization sites responsible for the formation of the soft clot. The soft clot is converted into the hard clot by factor XIIIA which catalyzes the epsilon-(gamma-glutamyl)lysine cross-linking between gamma chains (stronger) and between alpha chains (weaker) of different monomers. In terms of processing, forms F13A-mediated cross-links between a glutamine and the epsilon-amino group of a lysine residue, forming fibronectin-fibrinogen heteropolymers. Post-translationally, phosphorylated by FAM20C in the extracellular medium.

It localises to the secreted. In terms of biological role, cleaved by the protease thrombin to yield monomers which, together with fibrinogen beta (FGB) and fibrinogen gamma (FGG), polymerize to form an insoluble fibrin matrix. Fibrin has a major function in hemostasis as one of the primary components of blood clots. In addition, functions during the early stages of wound repair to stabilize the lesion and guide cell migration during re-epithelialization. Was originally thought to be essential for platelet aggregation, based on in vitro studies using anticoagulated blood. However, subsequent studies have shown that it is not absolutely required for thrombus formation in vivo. Enhances expression of SELP in activated platelets via an ITGB3-dependent pathway. Maternal fibrinogen is essential for successful pregnancy. Fibrin deposition is also associated with infection, where it protects against IFNG-mediated hemorrhage. May also facilitate the immune response via both innate and T-cell mediated pathways. In Rattus norvegicus (Rat), this protein is Fibrinogen alpha chain (Fga).